The primary structure comprises 249 residues: Galactan endo-beta-1,3-galactanase (249 aa).

Positions Met-1–Ala-21 are cleaved as a signal peptide. Positions Ser-34–Thr-247 constitute a GH16 domain. Asn-48 is a glycosylation site (N-linked (GlcNAc...) asparagine). Glu-138 (nucleophile) is an active-site residue. Glu-143 functions as the Proton donor in the catalytic mechanism. Residue Asn-156 is glycosylated (N-linked (GlcNAc...) asparagine).

It belongs to the glycosyl hydrolase 16 family. In terms of processing, N-glycosylated.

The catalysed reaction is The enzyme specifically hydrolyzes beta-1,3-galactan and beta-1,3-galactooligosaccharides.. In terms of biological role, specifically hydrolyzes beta-1,3-galactan in an endo-fashion. Requires at least 3 contiguous beta-1,3-residues. The protein is Galactan endo-beta-1,3-galactanase (EN3GAL) of Flammulina velutipes (Agaricus velutipes).